The sequence spans 178 residues: PRA1 family protein 2 (178 aa).

Residues 1–41 (MSEVRLPPLRALDDFVLGSARLAAPDPGDPQRWCHRVINNL) lie on the Cytoplasmic side of the membrane. The chain crosses the membrane as a helical span at residues 42 to 62 (LYYQTNYLLCFGISLALAGYI). The Extracellular segment spans residues 63–64 (RP). Residues 65 to 85 (LHTLLSALVVVVALGVLVWAA) form a helical membrane-spanning segment. Residues 86-96 (ETRAAVRRCRR) are Cytoplasmic-facing. Residues 97–119 (SHPAACLAAVLAISLFILWAVGG) traverse the membrane as a helical segment. Over 120–122 (AFT) the chain is Extracellular. The helical transmembrane segment at 123-140 (FLLSITAPVFLILLHASL) threads the bilayer. At 141–178 (RLRNLKNKIENKIESIGLKRTPMGLLLEALGQEQEAGS) the chain is on the cytoplasmic side.

This sequence belongs to the PRA1 family. Interacts with CCR5 and GDE1.

Its subcellular location is the endosome membrane. May be involved in ER/Golgi transport and vesicular traffic. Plays a proapoptotic role in cerulenin-induced neuroblastoma apoptosis. This Mus musculus (Mouse) protein is PRA1 family protein 2 (Praf2).